Consider the following 256-residue polypeptide: uncharacterized protein (256 aa).

Disordered stretches follow at residues 1–171 (MARG…QLKH) and 185–256 (NGQR…LYND). Positions 14-39 (KRRSKVQEEEEHVEGSEEEVEEPEQK) form a coiled coil. 2 stretches are compositionally biased toward acidic residues: residues 21 to 35 (EEEE…EVEE) and 64 to 92 (SDDD…DNDE). Over residues 108–129 (NRGDHESHDDNSDNEEQGDRGN) the composition is skewed to basic and acidic residues. Gly residues predominate over residues 192–205 (KRGGPPRGSFGQRG). The segment covering 219-234 (RQGDTRDTRDTRDTRL) has biased composition (basic and acidic residues).

This is an uncharacterized protein from Acanthamoeba polyphaga (Amoeba).